Here is a 311-residue protein sequence, read N- to C-terminus: Olfactory receptor 10D1B (311 aa).

Topologically, residues 1–24 are extracellular; it reads MKNLSVVTQFILLGIPHTEGVETM. Residues 25–45 traverse the membrane as a helical segment; that stretch reads LFVLFFSFYIFTLVGNLLILL. Residues 46 to 54 lie on the Cytoplasmic side of the membrane; that stretch reads AIVSSSRLH. A helical transmembrane segment spans residues 55–75; it reads TPMYFFLCQLSVCDIFFPSVS. Topologically, residues 76 to 95 are extracellular; that stretch reads SPKMLFYLSGNTPAISYAGC. A disulfide bridge links Cys-95 with Cys-187. A helical membrane pass occupies residues 96 to 116; the sequence is VSQLFFYHFLGGTECFLYTVM. The Cytoplasmic segment spans residues 117 to 137; the sequence is AYDRFVAICYPLRYSVIMSHR. Residues 138–158 form a helical membrane-spanning segment; sequence ICAFLAMGTAVFGCIHSTFLT. The Extracellular segment spans residues 159 to 192; sequence TLTFQLPYCGPKDVNYYFCDIPVVMKLACADTST. A helical transmembrane segment spans residues 193 to 213; the sequence is LEMVGFISVGLMPLSCFFFIL. Topologically, residues 214–237 are cytoplasmic; it reads TSYSCIVRSILQIRSTEGRHRAFS. Residues 238–258 form a helical membrane-spanning segment; it reads TCSAHFTAILLFYMPVIFIYL. The Extracellular portion of the chain corresponds to 259 to 271; sequence RPTPSPWLDATVQ. A helical transmembrane segment spans residues 272-288; the sequence is ILNNLVTPMLNPLIYSL. Residues 289-311 lie on the Cytoplasmic side of the membrane; that stretch reads RNKEVKSSLWTVLHLLCFLPKHL.

The protein belongs to the G-protein coupled receptor 1 family.

The protein localises to the cell membrane. Its function is as follows. Odorant receptor. The polypeptide is Olfactory receptor 10D1B (Mus musculus (Mouse)).